We begin with the raw amino-acid sequence, 831 residues long: Phenylalanine--tRNA ligase beta subunit (831 aa).

The 112-residue stretch at 44 to 155 folds into the tRNA-binding domain; the sequence is GPVDGPVTVG…GAAEPGADGA (112 aa). Residues 414–489 form the B5 domain; that stretch reads WSPPPIRMGV…RLEGLEVIPS (76 aa). 4 residues coordinate Mg(2+): D467, D473, E476, and E477. Residues 737 to 830 enclose the FDX-ACB domain; the sequence is SPYPAVFQDV…AAERVGAVLR (94 aa).

This sequence belongs to the phenylalanyl-tRNA synthetase beta subunit family. Type 1 subfamily. In terms of assembly, tetramer of two alpha and two beta subunits. Mg(2+) serves as cofactor.

The protein localises to the cytoplasm. It carries out the reaction tRNA(Phe) + L-phenylalanine + ATP = L-phenylalanyl-tRNA(Phe) + AMP + diphosphate + H(+). The chain is Phenylalanine--tRNA ligase beta subunit from Mycobacterium bovis (strain ATCC BAA-935 / AF2122/97).